Reading from the N-terminus, the 300-residue chain is Hairy/enhancer-of-split related with YRPW motif protein 1 (300 aa).

A disordered region spans residues 1 to 52 (MKRGHDYSSSDSELDENIEVEKESADENGNLSSAAGSMSPSTSSQILARKRR). Over residues 32 to 44 (SSAAGSMSPSTSS) the composition is skewed to low complexity. The 56-residue stretch at 48 to 103 (ARKRRRGIIEKRRRDRINNSLSELRRLVPSAFEKQGSAKLEKAEILQMTVDHLKML) folds into the bHLH domain. The region spanning 121–157 (YRSLGFRECLAEVARYLSIIEGMDTTDPLRVRLVSHL) is the Orange domain. Residues 199-210 (AHTSANSTSSST) show a composition bias toward low complexity. Disordered regions lie at residues 199-232 (AHTSANSTSSSTEAHHQNRLPGSPHAETSSLRVP) and 278-300 (LSPTTPTPSGKPYRPWGTEIGAF). A YRPW motif motif is present at residues 290–293 (YRPW).

This sequence belongs to the HEY family. In terms of assembly, efficient DNA binding requires dimerization with another bHLH protein. Binds DNA in the form of homodimer or more strongly as a heterodimer with hes1/hairy1 or hes4/hairy2b. Also weakly interacts with the bHLH proteins hes2, neurod1 and neurod4/ath3. Interacts (via Orange domain) with ccdc89/boip (via C-terminus).

Its subcellular location is the nucleus. Downstream effector of Notch signaling. Transcriptional repressor which binds preferentially to the canonical E box sequence 5'-CACGTG-3'. Acts as a suppressor of neurogenesis by antagonizing proneural gene function. Functions during floorplate development. Plays a role in pronephros formation in the inhibition of distal tubule and duct cell fates and the promotion of glomus and proximal tubule formation. The chain is Hairy/enhancer-of-split related with YRPW motif protein 1 (hey1) from Xenopus tropicalis (Western clawed frog).